The chain runs to 274 residues: Pyridoxal phosphate homeostasis protein (274 aa).

S6 bears the Phosphoserine mark. An N6-(pyridoxal phosphate)lysine modification is found at K47. Phosphotyrosine is present on Y69. K125 is subject to N6-succinyllysine. S226 and S244 each carry phosphoserine.

It belongs to the pyridoxal phosphate-binding protein YggS/PROSC family.

Pyridoxal 5'-phosphate (PLP)-binding protein, which may be involved in intracellular homeostatic regulation of pyridoxal 5'-phosphate (PLP), the active form of vitamin B6. The sequence is that of Pyridoxal phosphate homeostasis protein from Mus musculus (Mouse).